The primary structure comprises 317 residues: Taste receptor type 2 member 14 (317 aa).

Over 1–7 the chain is Extracellular; it reads MGGVIKS. A helical transmembrane segment spans residues 8-28; that stretch reads IFTFVLIVEFIIGNLGNSFIA. Residues 29-55 are Cytoplasmic-facing; the sequence is LVNCIDWVKGRKISSVDRILTALAISK. Residues 56–76 form a helical membrane-spanning segment; that stretch reads ISLVWLIFGSWCVSVFFPALF. Residues 77–87 lie on the Extracellular side of the membrane; the sequence is ATEKMFRMLTN. The cholesterol site is built by threonine 86 and tryptophan 89. A helical transmembrane segment spans residues 88–108; that stretch reads IWTVINHFSVWLATGLGTFYF. The Cytoplasmic portion of the chain corresponds to 109-129; that stretch reads LKIANFSNSIFLYLKWRVKKV. A helical transmembrane segment spans residues 130–150; sequence VLVLLLVTSVFLFLNIALINI. At 151-184 the chain is on the extracellular side; that stretch reads HINASINGYRRNKTCSSDSSNFTRFSSLIVLTST. Asparagine 153, asparagine 162, and asparagine 171 each carry an N-linked (GlcNAc...) asparagine glycan. Residue valine 180 coordinates cholesterol. The chain crosses the membrane as a helical span at residues 185–205; that stretch reads VFIFIPFTLSLAMFLLLIFSX. Over 206–232 the chain is Cytoplasmic; it reads WKHRKKMQHTVKRSGDASTKAHRGVKS. The chain crosses the membrane as a helical span at residues 233 to 253; that stretch reads VXTFFLLYAIFCLSFFISVWT. At 254–261 the chain is on the extracellular side; the sequence is SERLEENL. Residues 262-282 traverse the membrane as a helical segment; the sequence is IILSQVMGMAYPSCHSCVLIL. Cholesterol-binding residues include serine 265 and methionine 268. At 283–317 the chain is on the cytoplasmic side; the sequence is GNKKLRQASLSVLLWLRYMFKDGEPSGHKEFRESS.

This sequence belongs to the G-protein coupled receptor T2R family. Core component of the TAS2R14-GNAI1 complex, consisting of TAS2R14, GNAI1, GNB1 and GNG2; within the complex interacts with GNAI1. Core component of the TAS2R14-GNAT3 complex, consisting of TAS2R14, GNAT3, GNB1 and GNG2; within the complex interacts with GNAT3. Core component of the TAS2R14-GNAS2 complex, consisting of TAS2R14, GNAS2, GNB1 and GNG2; within the complex interacts with GNAS2.

It localises to the membrane. The enzyme catalyses Ca(2+)(in) = Ca(2+)(out). It catalyses the reaction 3',5'-cyclic AMP(in) = 3',5'-cyclic AMP(out). Its activity is regulated as follows. Basal activity is enhanced by binding to bitter tastants, such as flufenamic acid and aristolochic acid. Regulated by cholesterol in a concentration-dependent manner. Gustducin-linked G-protein coupled receptor that plays a role in the perception of bitterness. The activity of this receptor stimulates GNAT3, activating the gustducin G-protein pathway. Likely plays a role in sensing the chemical composition of the gastrointestinal content and other extra-oral tissues via the inhibitory G-protein pathways. The polypeptide is Taste receptor type 2 member 14 (TAS2R14) (Pan troglodytes (Chimpanzee)).